The chain runs to 323 residues: MTALNHWQPSADIKNLLKRAKIIAEIRQFFTERGLLEVETPVLSEFGVTDLHLSTFSTEFLAPFGEQSKTLWLSTSPEYHMKRLLAAGSGPIFQISKVFRNEEAGNRHNPEFTMLEWYRPHFHMHRLINEVDDLLQQILDCPPAESLSYQFVFQEYVGLDPLSAERSELIEAARKHNFMAEDNEDRDTLLQFLFSEVVEPQIGKERPIAVYHFPSTQAALAQVSPEDQRVAERFEFYYKGLELANGFHELADAQEQRHRFELDNQQRQKCELPTREIDERFLAALEAGMPDASGVALGIDRLMMIALDCEKINDVISFAVDNA.

Substrate is bound at residue 76–78; it reads SPE. ATP contacts are provided by residues 100–102 and Asn-109; that span reads RNE. A substrate-binding site is contributed by Tyr-118. 242 to 243 contacts ATP; it reads EL. Glu-249 contacts substrate. Gly-298 contributes to the ATP binding site.

This sequence belongs to the class-II aminoacyl-tRNA synthetase family. EpmA subfamily. In terms of assembly, homodimer.

The enzyme catalyses D-beta-lysine + L-lysyl-[protein] + ATP = N(6)-((3R)-3,6-diaminohexanoyl)-L-lysyl-[protein] + AMP + diphosphate + H(+). In terms of biological role, with EpmB is involved in the beta-lysylation step of the post-translational modification of translation elongation factor P (EF-P). Catalyzes the ATP-dependent activation of (R)-beta-lysine produced by EpmB, forming a lysyl-adenylate, from which the beta-lysyl moiety is then transferred to the epsilon-amino group of a conserved specific lysine residue in EF-P. The polypeptide is Elongation factor P--(R)-beta-lysine ligase (Haemophilus influenzae (strain PittGG)).